The chain runs to 481 residues: Chromosomal replication initiator protein DnaA (481 aa).

Residues M1 to P74 are domain I, interacts with DnaA modulators. Residues P74 to T144 are domain II. A disordered region spans residues A101–V123. A compositionally biased stretch (low complexity) spans Q111 to V123. The domain III, AAA+ region stretch occupies residues R145–A361. ATP-binding residues include G189, G191, K192, and T193. Positions R362–G481 are domain IV, binds dsDNA.

It belongs to the DnaA family. In terms of assembly, oligomerizes as a right-handed, spiral filament on DNA at oriC.

The protein resides in the cytoplasm. In terms of biological role, plays an essential role in the initiation and regulation of chromosomal replication. ATP-DnaA binds to the origin of replication (oriC) to initiate formation of the DNA replication initiation complex once per cell cycle. Binds the DnaA box (a 9 base pair repeat at the origin) and separates the double-stranded (ds)DNA. Forms a right-handed helical filament on oriC DNA; dsDNA binds to the exterior of the filament while single-stranded (ss)DNA is stabiized in the filament's interior. The ATP-DnaA-oriC complex binds and stabilizes one strand of the AT-rich DNA unwinding element (DUE), permitting loading of DNA polymerase. After initiation quickly degrades to an ADP-DnaA complex that is not apt for DNA replication. Binds acidic phospholipids. This Aromatoleum aromaticum (strain DSM 19018 / LMG 30748 / EbN1) (Azoarcus sp. (strain EbN1)) protein is Chromosomal replication initiator protein DnaA.